A 211-amino-acid polypeptide reads, in one-letter code: Ribosomal RNA small subunit methyltransferase G (211 aa).

Residues G74, L79, 125–126, and R140 each bind S-adenosyl-L-methionine; that span reads AE.

This sequence belongs to the methyltransferase superfamily. RNA methyltransferase RsmG family.

It localises to the cytoplasm. Its function is as follows. Specifically methylates the N7 position of guanine in position 518 of 16S rRNA. In Clavibacter michiganensis subsp. michiganensis (strain NCPPB 382), this protein is Ribosomal RNA small subunit methyltransferase G.